A 368-amino-acid chain; its full sequence is MIDKLAREELVDMVPYQSARRLFASGDNEQANSRTWLNANEAPGQGQYQLSSENINRYPDFQPQALLKAYSNYCNLPVDNILATRGADEGIELIIRSFCRAYQDSVLICPPTYGMYAISAENHGAGIISVPLVNTPEAQCQLDLEGLKQQVGKAKVVFLCSPGNPTGNTLSSAQIKAAIEIFKDSAMVVVDEAYYEYTNKELGAEQVNIKLISQYDNVIILRTLSKAFALAGLRCGFTLSNKAVITLLSKVIAPYPIAAPVAEIASKVLTNDLDVMQARVISANSLREQLSEWLKQQKWCSDVFDSNANFVLFRCNNIDEKNKVFNLLVEHNILIRDQSKQQQLENCLRISIGSEDEIAQLKQLLETL.

Lys226 carries the post-translational modification N6-(pyridoxal phosphate)lysine.

This sequence belongs to the class-II pyridoxal-phosphate-dependent aminotransferase family. Histidinol-phosphate aminotransferase subfamily. In terms of assembly, homodimer. Pyridoxal 5'-phosphate serves as cofactor.

It catalyses the reaction L-histidinol phosphate + 2-oxoglutarate = 3-(imidazol-4-yl)-2-oxopropyl phosphate + L-glutamate. It participates in amino-acid biosynthesis; L-histidine biosynthesis; L-histidine from 5-phospho-alpha-D-ribose 1-diphosphate: step 7/9. The chain is Histidinol-phosphate aminotransferase from Colwellia psychrerythraea (strain 34H / ATCC BAA-681) (Vibrio psychroerythus).